The sequence spans 669 residues: Probable ferric reductase transmembrane component (669 aa).

Positions 17–86 are disordered; it reads FKTNGTEYAK…SGKGNSGTST (70 aa). N-linked (GlcNAc...) asparagine glycosylation is found at Asn-20, Asn-52, Asn-64, and Asn-116. Positions 28–86 are enriched in low complexity; that stretch reads TTKSSSGSKTSTSASKSSKSTGSSNASKSSTNAHGSNSSTSSTSSSSSKSGKGNSGTST. A helical transmembrane segment spans residues 122–142; it reads GSGLLGYWAGILAIAIFANMI. The N-linked (GlcNAc...) asparagine glycan is linked to Asn-152. 5 helical membrane passes run 198–218, 234–254, 281–301, 313–333, and 340–360; these read IIVV…IHHV, LIAD…ILFG, VDVL…KATG, IWGT…MLFF, and VFFL…YYHL. The 135-residue stretch at 239-373 folds into the Ferric oxidoreductase domain; it reads TGILGTFLIP…GYGDFMWAAI (135 aa). One can recognise an FAD-binding FR-type domain in the interval 374 to 492; the sequence is AVWAFDRVVR…EGPYGEPSSA (119 aa). Residue 437 to 442 coordinates FAD; it reads HPFTFT. Residues 499–519 form a helical membrane-spanning segment; that stretch reads VVFVAGGNGIPGIYSECVDLA. Asn-524 and Asn-653 each carry an N-linked (GlcNAc...) asparagine glycan.

This sequence belongs to the ferric reductase (FRE) family. The cofactor is FAD.

The protein localises to the membrane. The enzyme catalyses 2 a Fe(II)-siderophore + NAD(+) + H(+) = 2 a Fe(III)-siderophore + NADH. The chain is Probable ferric reductase transmembrane component (CFL1) from Candida albicans (Yeast).